The primary structure comprises 492 residues: N-succinylglutamate 5-semialdehyde dehydrogenase (492 aa).

An NAD(+)-binding site is contributed by 220–225 (GSANTG). Residues glutamate 243 and cysteine 277 contribute to the active site.

The protein belongs to the aldehyde dehydrogenase family. AstD subfamily.

The catalysed reaction is N-succinyl-L-glutamate 5-semialdehyde + NAD(+) + H2O = N-succinyl-L-glutamate + NADH + 2 H(+). The protein operates within amino-acid degradation; L-arginine degradation via AST pathway; L-glutamate and succinate from L-arginine: step 4/5. Functionally, catalyzes the NAD-dependent reduction of succinylglutamate semialdehyde into succinylglutamate. This chain is N-succinylglutamate 5-semialdehyde dehydrogenase, found in Escherichia coli O127:H6 (strain E2348/69 / EPEC).